The chain runs to 245 residues: MILFPAIDLKNGQCVRLEQGDMARATVFNLDPAAQARSFAAQGFQYLHVVDLDGAFAGKPVNAQAVESMLKVVSMPVQLGGGIRDLKTVEGWLAKGISRVIIGTAAVRDPALVKQAAKKFPGRVAVGLDARDGKVAVEGWAESSQVTALEIAQRFEDAGVAAIIFTDIARDGLLKGINWEATIALAEAVSIPVIASGGLASIDDVKALLSPRANKLEGAIAGRALYDGRLDPAEALALIDAARAA.

D8 (proton acceptor) is an active-site residue. The active-site Proton donor is the D129.

This sequence belongs to the HisA/HisF family.

The protein resides in the cytoplasm. It catalyses the reaction 1-(5-phospho-beta-D-ribosyl)-5-[(5-phospho-beta-D-ribosylamino)methylideneamino]imidazole-4-carboxamide = 5-[(5-phospho-1-deoxy-D-ribulos-1-ylimino)methylamino]-1-(5-phospho-beta-D-ribosyl)imidazole-4-carboxamide. Its pathway is amino-acid biosynthesis; L-histidine biosynthesis; L-histidine from 5-phospho-alpha-D-ribose 1-diphosphate: step 4/9. This is 1-(5-phosphoribosyl)-5-[(5-phosphoribosylamino)methylideneamino] imidazole-4-carboxamide isomerase from Rhodopseudomonas palustris (strain BisB5).